Reading from the N-terminus, the 817-residue chain is DNA ligase (817 aa).

Residues D45–D49, S94–I95, and E131 each bind NAD(+). Catalysis depends on K133, which acts as the N6-AMP-lysine intermediate. NAD(+)-binding residues include R154, E193, K311, and K335. Residues C444, C447, C462, and C468 each contribute to the Zn(2+) site. The BRCT domain occupies A733–A817.

This sequence belongs to the NAD-dependent DNA ligase family. LigA subfamily. Requires Mg(2+) as cofactor. The cofactor is Mn(2+).

The enzyme catalyses NAD(+) + (deoxyribonucleotide)n-3'-hydroxyl + 5'-phospho-(deoxyribonucleotide)m = (deoxyribonucleotide)n+m + AMP + beta-nicotinamide D-nucleotide.. DNA ligase that catalyzes the formation of phosphodiester linkages between 5'-phosphoryl and 3'-hydroxyl groups in double-stranded DNA using NAD as a coenzyme and as the energy source for the reaction. It is essential for DNA replication and repair of damaged DNA. The polypeptide is DNA ligase (Ralstonia pickettii (strain 12J)).